Consider the following 153-residue polypeptide: Regulatory protein RecX (153 aa).

Belongs to the RecX family.

It localises to the cytoplasm. Modulates RecA activity. This Pseudomonas aeruginosa (strain UCBPP-PA14) protein is Regulatory protein RecX.